The chain runs to 571 residues: Glutamate--tRNA ligase (571 aa).

The short motif at 114–124 (PNPNGPWHVGH) is the 'HIGH' region element. The interval 431–453 (KPLAGGPESASPPLHPNDEDRGR) is disordered.

Belongs to the class-I aminoacyl-tRNA synthetase family. Glutamate--tRNA ligase type 2 subfamily.

Its subcellular location is the cytoplasm. The catalysed reaction is tRNA(Glu) + L-glutamate + ATP = L-glutamyl-tRNA(Glu) + AMP + diphosphate. Functionally, catalyzes the attachment of glutamate to tRNA(Glu) in a two-step reaction: glutamate is first activated by ATP to form Glu-AMP and then transferred to the acceptor end of tRNA(Glu). The protein is Glutamate--tRNA ligase of Natronomonas pharaonis (strain ATCC 35678 / DSM 2160 / CIP 103997 / JCM 8858 / NBRC 14720 / NCIMB 2260 / Gabara) (Halobacterium pharaonis).